Consider the following 186-residue polypeptide: Putative transcriptional regulator encoded by LINC00473 (186 aa).

The tract at residues M1–A62 is disordered. Basic and acidic residues predominate over residues F18–M40.

In terms of biological role, may play a role in cAMP-mediated gene transcription. The protein is Putative transcriptional regulator encoded by LINC00473 (LINC00473) of Homo sapiens (Human).